The sequence spans 243 residues: 7-carboxy-7-deazaguanine synthase (243 aa).

Substrate is bound by residues 15-17 and Arg-30; that span reads IQG. Residues 21 to 239 form the Radical SAM core domain; that stretch reads VIGQKTMFVR…PQLHTLLWGN (219 aa). Cys-34, Cys-38, and Cys-41 together coordinate [4Fe-4S] cluster. Residue Ser-43 coordinates Mg(2+). Ser-81 contributes to the substrate binding site. S-adenosyl-L-methionine contacts are provided by residues Gly-83 and 127-129; that span reads SPK.

Belongs to the radical SAM superfamily. 7-carboxy-7-deazaguanine synthase family. In terms of assembly, homodimer. It depends on [4Fe-4S] cluster as a cofactor. S-adenosyl-L-methionine is required as a cofactor. Requires Mg(2+) as cofactor.

The catalysed reaction is 6-carboxy-5,6,7,8-tetrahydropterin + H(+) = 7-carboxy-7-deazaguanine + NH4(+). It participates in purine metabolism; 7-cyano-7-deazaguanine biosynthesis. Functionally, catalyzes the complex heterocyclic radical-mediated conversion of 6-carboxy-5,6,7,8-tetrahydropterin (CPH4) to 7-carboxy-7-deazaguanine (CDG), a step common to the biosynthetic pathways of all 7-deazapurine-containing compounds. The protein is 7-carboxy-7-deazaguanine synthase of Bacillus subtilis (strain 168).